The sequence spans 423 residues: Protein IQ-DOMAIN 16 (423 aa).

IQ domains are found at residues 99–127 (RHWA…GIVK) and 128–150 (LQAL…CIKA). The stretch at 231–251 (QKKLEIAIKREKAQALALSNQ) forms a coiled coil. The tract at residues 235 to 252 (EIAIKREKAQALALSNQI) is calmodulin-binding.

Belongs to the IQD family. Binds to multiple calmodulin (CaM) in the presence of Ca(2+) and CaM-like proteins.

Its subcellular location is the cytoplasm. The protein localises to the cytoskeleton. It localises to the cell membrane. May be involved in cooperative interactions with calmodulins or calmodulin-like proteins. Recruits calmodulin proteins to microtubules, thus being a potential scaffold in cellular signaling and trafficking. Regulates cell shape and elongation in aerial organs (i.e. cotyledons, leaves, and hypocotyls) probably by regulating cortical microtubules (MT) arrays orientation. May associate with nucleic acids and regulate gene expression at the transcriptional or post-transcriptional level. This is Protein IQ-DOMAIN 16 from Arabidopsis thaliana (Mouse-ear cress).